A 1325-amino-acid chain; its full sequence is MREAAERRQQLELEHEQALAVLNAKQQEIELLQKAQVEAKKEHEGAVQLLEAKVRELEEKCRTQSEQFNLLSRELEKFRQQAGKIDLLSSNPLTSSDISGSPSKSLSQLMNGIATSLGKGHESPSGSRCVISEFIRPLQISGDKPEQLSVKPTFLSKSRSDTPRCRFDSDMDNDQNSNTSKQRYSGKVHLCIARYSYNPFDGPNENPEAELPLTAGKYLYVYGDMDEDGFYEGELLDGQRGLVPSNFVDFVQDNETRLSSTLSSEQDQNFINHSGSTLEGDILEISPPSHIDSSVISNGAGTLDVNIDEIGEDIVPYPRKITLIKQLAKSVIVGWEPPVVPPGWGTINSYNVLVDKEVRMNIALGSRTKALIEKLNISTCTYRISIQSITNKGNSDELQCTLLVGKDVVVAPSNLKVDNITQISAELSWLPTNSNYSHVIFLNEEEFDIVKAASYKYHFFNLKPNMAYKVKVMAKPHQMPWQLPLEQREKKEAFVEFSTLPAGPPAPPQDVTVRAGSTQATIQVSWKPPALTATGTSHGANVTGYGVYAKGQRVAEVIFPTAENTLVELMRLRNLEAKEVTVRTLSAQGESVDSSVAAIPSDLLVPPSPHPRTAPKSKPLASAGAPETKEEHLGPHLKIDESWEQTHSASPVHGHTLEPPVPNFPSSLQGRRSPSPNRILPQPQGTPVPNTVAKAMAREAAQRVAESNRMERRSVFSERSNAAQYANSDDEEDGYDSPNVKRRGASVDDFLKGSELGKQPHYCHGEDYHTESSRGSDLSDIMEEDEEELYSEMQLEDGGRRRVSLTSHNALKECNKNKTTDATFLEQPDFSQQIHHSKKLFSIPEVAEEDGEYSELLYKQGLGMPYKKKSTIARDSRPPRPYNQDQQHNFWYPAKHRISGMEDFTADDKGCKYSRSLSRSPDSGLDCGSEEEESRFTFRYTCDSVSANVASSCCADTADCSCRKSMRPLLARRKTLTRQTSIEEDFGDLGSSFVEPRSEQVKSSYEKKYETQKCNRTDNLSNEDIQGGWKNDLKMADSRAAGPLAKSSHRDAEDSLLLGNPSSAGRPERVEHAGRRSSHGSAVPQRSRPMLVPSIDGYGGHDHLSPDIYEESETDPGTEDISTRIFVALFDYDPLTMSPNPDAAEEELPFKEGQIIKVYGDKDADGFYRGETCTRIGLIPCNMVSEIQADDEEMMDQLLKQGFLPLNTPVEKIERNRRSGRQHSVSTRRMVALYDYDPRESSPNVDVEAELTFCTGDIITVFGEIDEDGFYYGELNGQKGLVPSNFLEEVPDDVEVYLSDAPSRYLHDTPMRTKAKRKKSVHFTP.

Residues 153-181 form a disordered region; the sequence is TFLSKSRSDTPRCRFDSDMDNDQNSNTSK. The segment covering 158 to 169 has biased composition (basic and acidic residues); sequence SRSDTPRCRFDS. Residues 186–253 form the SH3 1 domain; that stretch reads GKVHLCIARY…PSNFVDFVQD (68 aa). Fibronectin type-III domains are found at residues 315–408, 411–493, and 507–608; these read VPYP…GKDV, APSN…KKEA, and PPQD…VPPS. Disordered regions lie at residues 601–778, 988–1010, and 1040–1090; these read SDLL…GSDL, DLGS…KKYE, and AAGP…SRPM. Over residues 627-641 the composition is skewed to basic and acidic residues; sequence ETKEEHLGPHLKIDE. The segment covering 664–676 has biased composition (polar residues); the sequence is FPSSLQGRRSPSP. A compositionally biased stretch (basic and acidic residues) spans 696-716; that stretch reads MAREAAQRVAESNRMERRSVF. A compositionally biased stretch (polar residues) spans 717-727; sequence SERSNAAQYAN. Basic and acidic residues-rich tracts occupy residues 763–774 and 996–1010; these read CHGEDYHTESSR and PRSE…KKYE. 2 consecutive SH3 domains span residues 1121 to 1189 and 1225 to 1292; these read ISTR…EIQA and VSTR…EVPD.

It belongs to the RIMBP family. As to quaternary structure, interacts with RIMS1, RIMS2, CACNA1D and CACNA1B, and potentially with other Ca(2+) channel alpha-1 isoforms. As to expression, brain, cochlea and retina.

The protein resides in the cell membrane. It localises to the synapse. Its function is as follows. Plays a role in the synaptic transmission as bifunctional linker that interacts simultaneously with RIMS1, RIMS2, CACNA1D and CACNA1B. This chain is RIMS-binding protein 2 (RIMBP2), found in Gallus gallus (Chicken).